A 142-amino-acid chain; its full sequence is Small ribosomal subunit protein uS12 (142 aa).

This sequence belongs to the universal ribosomal protein uS12 family. As to quaternary structure, part of the 30S ribosomal subunit.

Functionally, with S4 and S5 plays an important role in translational accuracy. Located at the interface of the 30S and 50S subunits. This is Small ribosomal subunit protein uS12 from Methanocorpusculum labreanum (strain ATCC 43576 / DSM 4855 / Z).